Reading from the N-terminus, the 961-residue chain is DNA replication licensing factor MCM2 (961 aa).

The segment covering 1–17 has biased composition (polar residues); sequence MDDSENNAPSTPGSPGF. 2 disordered regions span residues 1 to 81 and 120 to 220; these read MDDS…FNDN and AEAE…EEDE. Positions 39–78 are enriched in acidic residues; the sequence is SDDDDDDVVGAEEAEVDPNVLPEDDGVVAAEEEEDGEDLF. Basic and acidic residues-rich tracts occupy residues 120 to 146 and 166 to 176; these read AEAELDARDVRTGAAPDRKLPRMLHDQ and PPREPRTPRSD. Acidic residues predominate over residues 205–220; that stretch reads QTDDDPYEDEFDEEDE. Residues 380 to 406 form a C4-type zinc finger; it reads CSKCGTVLGPFFQNSYTEVKVGSCPEC. The 207-residue stretch at 524–730 folds into the MCM domain; sequence IGERIVKSIA…FTDEMLARFV (207 aa). 574-581 provides a ligand contact to ATP; sequence GDPGTAKS. An Arginine finger motif is present at residues 706–709; it reads SRFD.

The protein belongs to the MCM family. As to quaternary structure, component of the minichromosome maintenance (MCM) complex, a heterotetramer composed of MCM2, MCM3, MCM4, MCM5, MCM6 and MCM7. Interacts with CSN5. As to expression, widely expressed, with higher expression in developing tissues.

Its subcellular location is the nucleus. The enzyme catalyses ATP + H2O = ADP + phosphate + H(+). Functionally, probable component of the MCM2-7 complex (MCM complex) that may function as a DNA helicase and which is essential to undergo a single round of replication initiation and elongation per cell cycle in eukaryotic cells. Can complement the fission yeast mcm2 mutant. This Oryza sativa subsp. japonica (Rice) protein is DNA replication licensing factor MCM2.